Consider the following 163-residue polypeptide: 2,3-dimethylmalate dehydratase small subunit (163 aa).

The protein belongs to the LeuD family. LeuD type 2 subfamily. In terms of assembly, heterodimer of a large and a small subunit.

The catalysed reaction is (2R,3S)-2,3-dimethylmalate = dimethylmaleate + H2O. It participates in cofactor degradation; nicotinate degradation; propanoate and pyruvate from 6-hydroxynicotinate: step 7/8. This Eubacterium barkeri (Clostridium barkeri) protein is 2,3-dimethylmalate dehydratase small subunit.